A 431-amino-acid chain; its full sequence is Transposase for insertion sequence element IS232 (431 aa).

Residues 20-79 form the HTH IS21-type domain; the sequence is PNFKKLMGNLKMKINKSQLARELNVDRRTIDKYLNGFTPKGTKNKTSKIDTYYEVIAALL. A DNA-binding region (H-T-H motif) is located at residues 35-54; that stretch reads KSQLARELNVDRRTIDKYLN. The Integrase catalytic domain occupies 140 to 315; sequence YETPPGEQAQ…IPVFALKQEK (176 aa).

The protein belongs to the transposase IS21/IS408/IS1162 family.

Its function is as follows. Involved in the transposition of the insertion sequence. This is Transposase for insertion sequence element IS232 from Bacillus thuringiensis subsp. berliner.